The following is a 131-amino-acid chain: MKKHGVLNSEIAAVLASLGHTDTIVIADCGLPIPDGVKRIDLAVEIGKPSFLDVLQVVADDMAIEKVTLAEEVINNNAEVNKEIELKLIEPAFEYVSHEQFKEHTKKAKAIIRTGEATPYANVILHAGVIF.

Histidine 20 acts as the Proton donor in catalysis. Substrate is bound by residues aspartate 28, histidine 98, and 120–122; that span reads YAN.

The protein belongs to the RbsD / FucU family. RbsD subfamily. Homodecamer.

The protein resides in the cytoplasm. The catalysed reaction is beta-D-ribopyranose = beta-D-ribofuranose. The protein operates within carbohydrate metabolism; D-ribose degradation; D-ribose 5-phosphate from beta-D-ribopyranose: step 1/2. Functionally, catalyzes the interconversion of beta-pyran and beta-furan forms of D-ribose. This is D-ribose pyranase from Bacillus cereus (strain AH187).